The following is a 154-amino-acid chain: Transcriptional repressor NrdR (154 aa).

A zinc finger spans residues 3–34; sequence CPFCGANDTKVIDSRLVAEGEQVRRRRECLAC. The 91-residue stretch at 49–139 folds into the ATP-cone domain; sequence PRLIKQDGSR…VYRRFQDLNE (91 aa).

Belongs to the NrdR family. Zn(2+) serves as cofactor.

In terms of biological role, negatively regulates transcription of bacterial ribonucleotide reductase nrd genes and operons by binding to NrdR-boxes. In Pseudomonas syringae pv. syringae (strain B728a), this protein is Transcriptional repressor NrdR.